Here is a 400-residue protein sequence, read N- to C-terminus: MSSKLVLVLNCGSSSLKFAIIDAVNGEEHLSGLAECFHLPEARLKWKMDGAKHEAALGAGAAHSEALNYIVNTILAQKPELSAQLTAIGHRIVHGGEKFTASAVINDEVLQGIKDSVPFAPLHNPAHLIGIAEALKSFPKLADKNVAVFDTAFHQTMPEESYLYALPYSLYRDHSVRRYGAHGTSHFYVTQEAAKALNKPVEEVNLITCHLGNGGSVTAVRNGKCVDTSMGLTPLEGLVMGTRSGDIDPAIIFHLHDSLGMSVDQINKMLTKESGLLGLTEVTSDCRYVEDNYESKADAKRAMDVFCHRLAKYIGAYSALMDGRLDAVIFTGGIGENAGMVRELTLNKLGLLGFEIDHERNMAARFGKSGAITKDGSRLALVIPTNEELVIAQDASRLTA.

Residue Asn10 participates in Mg(2+) binding. Lys17 lines the ATP pocket. Residue Arg91 participates in substrate binding. Asp150 (proton donor/acceptor) is an active-site residue. ATP contacts are provided by residues 210–214 (HLGNG), 285–287 (DCR), and 333–337 (GIGEN). Residue Glu387 participates in Mg(2+) binding.

Belongs to the acetokinase family. Homodimer. It depends on Mg(2+) as a cofactor. Mn(2+) serves as cofactor.

Its subcellular location is the cytoplasm. The enzyme catalyses acetate + ATP = acetyl phosphate + ADP. It participates in metabolic intermediate biosynthesis; acetyl-CoA biosynthesis; acetyl-CoA from acetate: step 1/2. In terms of biological role, catalyzes the formation of acetyl phosphate from acetate and ATP. Can also catalyze the reverse reaction. The sequence is that of Acetate kinase from Serratia proteamaculans (strain 568).